Here is a 455-residue protein sequence, read N- to C-terminus: Pentatricopeptide repeat-containing protein At3g26630, chloroplastic (455 aa).

The N-terminal 19 residues, 1–19 (MAAPSPSSPPNLLSPPPFR), are a transit peptide targeting the chloroplast. PPR repeat units follow at residues 51-81 (DQLL…LQSP), 82-117 (STFT…QSQF), 118-152 (DKFT…GFFN), 153-187 (DVFF…SIVS), 188-214 (WTTM…MPMR), 215-249 (NVVS…DVKP), 250-284 (NEFT…GFVL), 285-315 (DCFL…MQGK), 316-350 (SLAT…ASVE), 352-387 (DAIT…GISP), and 388-418 (IREH…MDSD).

It belongs to the PPR family. PCMP-A subfamily.

It localises to the plastid. The protein localises to the chloroplast. This is Pentatricopeptide repeat-containing protein At3g26630, chloroplastic (PCMP-A6) from Arabidopsis thaliana (Mouse-ear cress).